The following is a 396-amino-acid chain: Elongation factor Tu (396 aa).

One can recognise a tr-type G domain in the interval K10–E206. Positions G19 to T26 are G1. Residue G19–T26 coordinates GTP. T26 contacts Mg(2+). The segment at G60–A64 is G2. The G3 stretch occupies residues D81–G84. GTP is bound by residues D81–H85 and N136–D139. The segment at N136–D139 is G4. The tract at residues S174–L176 is G5.

This sequence belongs to the TRAFAC class translation factor GTPase superfamily. Classic translation factor GTPase family. EF-Tu/EF-1A subfamily. Monomer.

It localises to the cytoplasm. It carries out the reaction GTP + H2O = GDP + phosphate + H(+). Its function is as follows. GTP hydrolase that promotes the GTP-dependent binding of aminoacyl-tRNA to the A-site of ribosomes during protein biosynthesis. This chain is Elongation factor Tu, found in Methylococcus capsulatus (strain ATCC 33009 / NCIMB 11132 / Bath).